The primary structure comprises 1046 residues: Translation initiation factor IF-2 (1046 aa).

Residues 49–450 (ALQQGNGGKA…GVMLPRGNGQ (402 aa)) are disordered. Composition is skewed to low complexity over residues 57–80 (KAAP…ARPA) and 89–106 (PAAA…AAPA). The span at 107 to 128 (APGPRPGPKPAPRPAPAAPAPA) shows a compositional bias: pro residues. Positions 129-169 (APEFTAPPSAPAAPAAAASGPRPGARPGAPKPGGARPATPG) are enriched in low complexity. Positions 177–194 (RGERTDRGDRGDRGDRQG) are enriched in basic and acidic residues. Over residues 195 to 214 (AARPGGQAPRPGARPAGPRP) the composition is skewed to low complexity. Gly residues-rich tracts occupy residues 239 to 248 (PRPGGAGAPG) and 266 to 280 (GGPG…GPGG). The span at 302–318 (GNRPNPGMMPQRPAAGP) shows a compositional bias: low complexity. Residues 319-414 (RPGGGGPGGR…GTQGAFGRPG (96 aa)) show a composition bias toward gly residues. Over residues 418–427 (RRGRKSKRQR) the composition is skewed to basic residues. One can recognise a tr-type G domain in the interval 539–711 (ARPPVVTVMG…VVLTADASLD (173 aa)). The G1 stretch occupies residues 548–555 (GHVDHGKT). 548–555 (GHVDHGKT) provides a ligand contact to GTP. The tract at residues 573–577 (GITQH) is G2. The G3 stretch occupies residues 598–601 (DTPG). Residues 598 to 602 (DTPGH) and 652 to 655 (NKID) each bind GTP. Residues 652–655 (NKID) form a G4 region. The interval 688–690 (SAK) is G5.

This sequence belongs to the TRAFAC class translation factor GTPase superfamily. Classic translation factor GTPase family. IF-2 subfamily.

The protein resides in the cytoplasm. Its function is as follows. One of the essential components for the initiation of protein synthesis. Protects formylmethionyl-tRNA from spontaneous hydrolysis and promotes its binding to the 30S ribosomal subunits. Also involved in the hydrolysis of GTP during the formation of the 70S ribosomal complex. The sequence is that of Translation initiation factor IF-2 from Streptomyces avermitilis (strain ATCC 31267 / DSM 46492 / JCM 5070 / NBRC 14893 / NCIMB 12804 / NRRL 8165 / MA-4680).